The chain runs to 159 residues: Large ribosomal subunit protein mL43 (159 aa).

Residues 123 to 159 (SPSIQGQWHPFTNKPTALGGLRPREVQNPAPTQRPAQ) form a disordered region.

This sequence belongs to the mitochondrion-specific ribosomal protein mL43 family. Component of the mitochondrial ribosome large subunit (39S) which comprises a 16S rRNA and about 50 distinct proteins.

It localises to the mitochondrion. This Bos taurus (Bovine) protein is Large ribosomal subunit protein mL43 (MRPL43).